The primary structure comprises 548 residues: Chaperone Ric-8A (548 aa).

2 disordered regions span residues 443-484 (DPGH…EGMT) and 517-548 (GKMT…SDTN).

Belongs to the synembryn family.

It localises to the cytoplasm. The protein resides in the cell cortex. Functionally, chaperone that specifically binds and folds nascent G alpha proteins prior to G protein heterotrimer formation, promoting their stability and activity: folds GNAI1, GNAO1, GNA13 and GNAQ. Does not fold G(s) G-alpha proteins GNAS nor GNAL. Also acts as a guanine nucleotide exchange factor (GEF) for G alpha proteins by stimulating exchange of bound GDP for free GTP. The sequence is that of Chaperone Ric-8A (ric8a) from Danio rerio (Zebrafish).